Consider the following 896-residue polypeptide: Serine/threonine-protein kinase TAO3 (896 aa).

Positions 24–277 (FVDLHEIGHG…SLELLRHDFV (254 aa)) constitute a Protein kinase domain. Residues 30 to 38 (IGHGSFGAV) and lysine 53 contribute to the ATP site. The active-site Proton acceptor is the aspartate 147. 2 disordered regions span residues 316 to 366 (SRNG…SVNS) and 403 to 423 (DEADHRDPRPELRPTQSVQSQ). Residues 334 to 348 (GTSLTRKMDSLGSNH) show a composition bias toward polar residues. Low complexity predominate over residues 349-366 (SIPSTSVSTGSQSSSVNS). Over residues 403–414 (DEADHRDPRPEL) the composition is skewed to basic and acidic residues. Coiled-coil stretches lie at residues 450-513 (EQEN…SKRQ), 545-650 (SFLE…LIRQ), and 752-873 (LKSL…IETF). The segment covering 565-587 (LNEDHSTPKKEKQERISKHKENL) has biased composition (basic and acidic residues). Positions 565–593 (LNEDHSTPKKEKQERISKHKENLQHTQAE) are disordered.

It belongs to the protein kinase superfamily. STE Ser/Thr protein kinase family. STE20 subfamily.

The protein localises to the cytoplasm. It is found in the cell membrane. Its subcellular location is the membrane raft. The protein resides in the lipid droplet. It carries out the reaction L-seryl-[protein] + ATP = O-phospho-L-seryl-[protein] + ADP + H(+). The catalysed reaction is L-threonyl-[protein] + ATP = O-phospho-L-threonyl-[protein] + ADP + H(+). In terms of biological role, serine/threonine-protein kinase that acts as a regulator of the p38/MAPK14 stress-activated MAPK cascade and of the MAPK8/JNK cascade. In response to DNA damage, involved in the G2/M transition DNA damage checkpoint by activating the p38/MAPK14 stress-activated MAPK cascade, probably by mediating phosphorylation of upstream MAP kinase kinases. Inhibits basal activity of the MAPK8/JNK cascade. The polypeptide is Serine/threonine-protein kinase TAO3 (taok3) (Xenopus laevis (African clawed frog)).